The sequence spans 77 residues: Probable Fe(2+)-trafficking protein (77 aa).

This sequence belongs to the Fe(2+)-trafficking protein family.

Could be a mediator in iron transactions between iron acquisition and iron-requiring processes, such as synthesis and/or repair of Fe-S clusters in biosynthetic enzymes. This chain is Probable Fe(2+)-trafficking protein, found in Baumannia cicadellinicola subsp. Homalodisca coagulata.